The following is a 144-amino-acid chain: Large ribosomal subunit protein uL15 (144 aa).

The disordered stretch occupies residues 1 to 57 (MELNNIKPADGAKKDKRRVGRGIGSGLGKTAGRGHKGQKSRAGGFHKVGFEGGQMPM). A compositionally biased stretch (gly residues) spans 21-31 (RGIGSGLGKTA).

Belongs to the universal ribosomal protein uL15 family. As to quaternary structure, part of the 50S ribosomal subunit.

Its function is as follows. Binds to the 23S rRNA. The chain is Large ribosomal subunit protein uL15 from Thiobacillus denitrificans (strain ATCC 25259 / T1).